The sequence spans 270 residues: uncharacterized protein (270 aa).

A signal peptide spans 1–22 (MEYIKKIALYMSVLLLIIFIGG). A lipid anchor (N-palmitoyl cysteine) is attached at Cys-23. Residue Cys-23 is the site of S-diacylglycerol cysteine attachment.

It belongs to the staphylococcal tandem lipoprotein family.

Its subcellular location is the cell membrane. This is an uncharacterized protein from Staphylococcus aureus (strain MW2).